The primary structure comprises 231 residues: UPF0758 protein RBAM_025090 (231 aa).

An MPN domain is found at 109–231; it reads VIRSPEDGAK…FVSLKEKGYL (123 aa). Zn(2+) contacts are provided by histidine 180, histidine 182, and aspartate 193. Positions 180–193 match the JAMM motif motif; it reads HNHPSGDPTPSRED.

Belongs to the UPF0758 family.

The protein is UPF0758 protein RBAM_025090 of Bacillus velezensis (strain DSM 23117 / BGSC 10A6 / LMG 26770 / FZB42) (Bacillus amyloliquefaciens subsp. plantarum).